We begin with the raw amino-acid sequence, 251 residues long: Probable transcriptional regulatory protein cu0933 (251 aa).

The tract at residues 56–79 (AKKSSVPNDNIERARKRGSGEEAG) is disordered.

This sequence belongs to the TACO1 family.

The protein localises to the cytoplasm. This Corynebacterium urealyticum (strain ATCC 43042 / DSM 7109) protein is Probable transcriptional regulatory protein cu0933.